The sequence spans 334 residues: Heat shock factor 2-binding protein (334 aa).

The interaction with BRME1 stretch occupies residues 14-51 (MGTKEEFVKVRKKDLERLTTEVMQIRDFLPRILNGEVL). Residues 49-122 (EVLESFQKLK…LLQQAEYCTE (74 aa)) are a coiled coil. An interaction with BRCA2 region spans residues 83–334 (ARLETVQADN…EDLRTLEHNV (252 aa)).

In terms of assembly, associates with HSF2. The interaction seems to occur between the trimerization domain of HSF2 and the N-terminal hydrophilic region of HSF2BP. Interacts (via C-terminus) with BNC1. Interacts (via N-terminus) with BRCA2 and BRME1; the interactions are direct and allow the formation of a ternary complex. The complex BRME1:HSF2BP:BRCA2 interacts with SPATA22, MEIOB and RAD51. Sumoylated by UBE2I in response to MEKK1-mediated stimuli. As to expression, testis specific. Overexpressed in some tumors.

It localises to the cytoplasm. It is found in the chromosome. Meiotic recombination factor component of recombination bridges involved in meiotic double-strand break repair. Modulates the localization of recombinases DMC1:RAD51 to meiotic double-strand break (DSB) sites through the interaction with BRCA2 and its recruitment during meiotic recombination. Indispensable for the DSB repair, homologous synapsis, and crossover formation that are needed for progression past metaphase I, is essential for spermatogenesis and male fertility. Required for proper recombinase recruitment in female meiosis. Inhibits BNC1 transcriptional activity during spermatogenesis, probably by sequestering it in the cytoplasm. May be involved in modulating HSF2 activation in testis. The chain is Heat shock factor 2-binding protein from Homo sapiens (Human).